We begin with the raw amino-acid sequence, 93 residues long: Late embryogenesis abundant protein B19.1A (93 aa).

The tract at residues 1 to 93 (MASGQQERSQ…IDESKFKTKS (93 aa)) is disordered. 2 stretches are compositionally biased toward basic and acidic residues: residues 9–19 (SQLDRKAREGE) and 73–93 (GGER…KTKS).

The protein belongs to the small hydrophilic plant seed protein family. In terms of tissue distribution, embryos and young seedlings.

Functionally, lea proteins are late embryonic proteins abundant in higher plant seed embryos. It may have a role in desiccation tolerance by acting as an osmoprotective protein or as a desiccation-damage repair protein. The chain is Late embryogenesis abundant protein B19.1A (B19.1A) from Hordeum vulgare (Barley).